Reading from the N-terminus, the 1228-residue chain is Serine/threonine-protein kinase CST20 (1228 aa).

Residues 1-18 (MSILSENNPTQTSITDPN) show a composition bias toward polar residues. Disordered regions lie at residues 1 to 382 (MSIL…TAHN) and 405 to 468 (NSTN…HSQE). Low complexity-rich tracts occupy residues 57-70 (NTTS…SLGS) and 95-123 (ESGS…NPES). Basic and acidic residues predominate over residues 148 to 159 (HQGDDSDNEKQY). 3 stretches are compositionally biased toward polar residues: residues 173-195 (DSYS…NNVS), 205-222 (TSSL…NENA), and 232-244 (PQVS…SFHD). A compositionally biased stretch (low complexity) spans 246 to 255 (SSVISSSTSV). 2 stretches are compositionally biased toward polar residues: residues 260–275 (SNPT…SYKS) and 309–328 (DTLS…TLQG). Positions 347–367 (NTSATSRNTSGTSTSTVVKNS) are enriched in low complexity. The span at 368–382 (RSGTSKLTSTSTAHN) shows a compositional bias: polar residues. Positions 437-466 (KVRGVFSSMFGKNKSTSSSSSSNSGSNSHS) are enriched in low complexity. The CRIB domain maps to 473–486 (ISTPFNAKHLAHVG). Disordered stretches follow at residues 543 to 829 (FHFD…ALAD) and 865 to 917 (LREK…KQAA). The span at 548-559 (NKSSSSGWSNEN) shows a compositional bias: polar residues. The span at 568–579 (SNSGSGGGGGGA) shows a compositional bias: gly residues. Over residues 602–611 (ITPSQSMPTK) the composition is skewed to polar residues. Over residues 612-626 (TESKQSENQHPHEDN) the composition is skewed to basic and acidic residues. Residues 627 to 640 (ATQYTPRTPTSHVQ) are compositionally biased toward polar residues. Low complexity-rich tracts occupy residues 668–681 (PSSQ…SQSD), 693–708 (ISPS…SKSL), and 734–747 (SIPK…SLSS). A compositionally biased stretch (polar residues) spans 748–759 (QLRPATNGSTTA). Pro residues predominate over residues 787 to 805 (APPPPPSASPAPPVPPAPP). The segment covering 809–824 (LSEQTSEIPQQRTAPS) has biased composition (polar residues). Residues 865-874 (LREKNERQNR) are compositionally biased toward basic and acidic residues. Residues 875–890 (QQETGQNNADTASGGS) show a composition bias toward polar residues. Positions 951 to 1203 (YVDLVKIGQG…ADELLHDNFI (253 aa)) constitute a Protein kinase domain. ATP contacts are provided by residues 957-965 (IGQGASGGV) and Lys981. The active-site Proton acceptor is the Asp1071.

It belongs to the protein kinase superfamily. STE Ser/Thr protein kinase family. STE20 subfamily.

It localises to the cytoplasm. The protein localises to the nucleus. It carries out the reaction L-seryl-[protein] + ATP = O-phospho-L-seryl-[protein] + ADP + H(+). It catalyses the reaction L-threonyl-[protein] + ATP = O-phospho-L-threonyl-[protein] + ADP + H(+). Its function is as follows. MAP4K component of the MAPK pathway required for the mating pheromone response, and the regulation of cell polarity and cell cycle. Phosphorylates histone H2B to form H2BS10ph. Required for hyphal formation and virulence. This is Serine/threonine-protein kinase CST20 (CST20) from Candida albicans (strain SC5314 / ATCC MYA-2876) (Yeast).